The sequence spans 646 residues: Beta-mannosyltransferase 6 (646 aa).

At 1-25 the chain is on the cytoplasmic side; it reads MGNYKPSIKQYVVTVKAIKSSQFGR. The chain crosses the membrane as a helical span at residues 26–46; it reads LGICAVVLLFVLGYPFYFISN. The Extracellular segment spans residues 47-646; it reads NPFDTSIRYQ…LTGGWLPSHN (600 aa). Residues asparagine 62, asparagine 81, asparagine 103, asparagine 117, asparagine 127, asparagine 132, asparagine 146, asparagine 334, and asparagine 393 are each glycosylated (N-linked (GlcNAc...) asparagine).

This sequence belongs to the BMT family.

Its subcellular location is the membrane. Its function is as follows. Beta-mannosyltransferase involved in cell wall biosynthesis. Required for beta-1,2-mannose transfer on phospholipomannan. Required for pro-inflammatory response in macrophages through phospholipomannan-induced TNF-alpha production. The polypeptide is Beta-mannosyltransferase 6 (BMT6) (Candida albicans (strain SC5314 / ATCC MYA-2876) (Yeast)).